A 1053-amino-acid polypeptide reads, in one-letter code: Putative ABC transporter C family member 15 (1053 aa).

The 180-residue stretch at 1–180 folds into the ABC transmembrane type-1 1 domain; sequence MSVDVQRITD…LPDLLSALVQ (180 aa). 4 consecutive transmembrane segments (helical) span residues 11–31, 36–56, 125–145, and 151–171; these read FIWY…AIYI, LGLG…CNYP, FILW…CMLM, and AGAV…IFGL. The ABC transporter 1 domain occupies 214-437; the sequence is VEIENGAFSW…NIGFEVLTQC (224 aa). ATP is bound at residue 249–256; it reads GAVGSGKS. 5 helical membrane-spanning segments follow: residues 481-503, 523-543, 595-615, 714-734, and 738-758; these read LLVP…SNYW, ILLV…ARTI, MAVK…TIFV, LSHF…EGVI, and IAGL…TVIW. The ABC transmembrane type-1 2 domain maps to 483 to 765; sequence VPFIILAQSC…VIWNICNAEN (283 aa). Positions 804-1036 constitute an ABC transporter 2 domain; that stretch reads FRDLQVRYAE…EDSFFSKLIK (233 aa). 836 to 843 contributes to the ATP binding site; it reads GRTGSGKS.

This sequence belongs to the ABC transporter superfamily. ABCC family. Conjugate transporter (TC 3.A.1.208) subfamily.

The protein resides in the membrane. It carries out the reaction ATP + H2O + xenobioticSide 1 = ADP + phosphate + xenobioticSide 2.. Functionally, pump for glutathione S-conjugates. In Arabidopsis thaliana (Mouse-ear cress), this protein is Putative ABC transporter C family member 15 (ABCC15).